The chain runs to 122 residues: MPTQPSRDLQTFPNPKPGRPFEIAMECPEFTCVCPMTGQPDFATIRLRYVPAERCVELKSLKLYLWSFRDEGTFHEAVTNRICDDLVAALAPRWIEVVGDFAVRGGIHTVVTARHGERPAGV.

Cysteine 34 functions as the Thioimide intermediate in the catalytic mechanism. The active-site Proton donor is aspartate 41. Substrate contacts are provided by residues 56–58 (VEL) and 75–76 (HE).

Belongs to the GTP cyclohydrolase I family. QueF type 1 subfamily.

The protein localises to the cytoplasm. The catalysed reaction is 7-aminomethyl-7-carbaguanine + 2 NADP(+) = 7-cyano-7-deazaguanine + 2 NADPH + 3 H(+). It participates in tRNA modification; tRNA-queuosine biosynthesis. Functionally, catalyzes the NADPH-dependent reduction of 7-cyano-7-deazaguanine (preQ0) to 7-aminomethyl-7-deazaguanine (preQ1). In Anaeromyxobacter dehalogenans (strain 2CP-C), this protein is NADPH-dependent 7-cyano-7-deazaguanine reductase.